We begin with the raw amino-acid sequence, 269 residues long: Flagellar hook-basal body complex protein FlhP (269 aa).

Residues 7-65 (TASTTLNQLQQQIDTISSNLSNSNTTGYKAKDTNFSELVRQQFDQVDEKNEEVAKARKT) are a coiled coil.

The protein belongs to the flagella basal body rod proteins family.

The protein is Flagellar hook-basal body complex protein FlhP (flhP) of Bacillus subtilis (strain 168).